A 334-amino-acid chain; its full sequence is MIEADRLIQPQIQAQDESIDRAMRPKMLDEYTGQDHTRAQLKVFIQAAKNRNEALDHMLIYGPPGLGKTTLAMIVANEMGVNIKSTSGPVLEKAGDLAALLTNLESGDVLFIDEIHRLSPVVEEILYPAMEDYQLDIMIGEGPAARSIKLDLPPFTLVGATTRAGALTSPLRARFGIPLRLEFYNIKDLSTIVTRSAQVMELDIDAEGAFEIARRSRGTPRIANRLLRRVRDYAQVKHDGAVTKFVAEHALDLLDVDSEGFDYMDRKLLLAIIDKFIGGPVGLDNLAAAIGEERETIEDVLEPFLIQQGFIQRTPRGRIATARAYQHFELIKPE.

A large ATPase domain (RuvB-L) region spans residues 4-184 (ADRLIQPQIQ…FGIPLRLEFY (181 aa)). ATP is bound by residues arginine 24, glycine 65, lysine 68, threonine 69, threonine 70, 131-133 (EDY), arginine 174, tyrosine 184, and arginine 221. Residue threonine 69 coordinates Mg(2+). Residues 185–255 (NIKDLSTIVT…VAEHALDLLD (71 aa)) are small ATPAse domain (RuvB-S). The segment at 258 to 334 (SEGFDYMDRK…YQHFELIKPE (77 aa)) is head domain (RuvB-H). 3 residues coordinate DNA: arginine 294, arginine 313, and arginine 318.

Belongs to the RuvB family. As to quaternary structure, homohexamer. Forms an RuvA(8)-RuvB(12)-Holliday junction (HJ) complex. HJ DNA is sandwiched between 2 RuvA tetramers; dsDNA enters through RuvA and exits via RuvB. An RuvB hexamer assembles on each DNA strand where it exits the tetramer. Each RuvB hexamer is contacted by two RuvA subunits (via domain III) on 2 adjacent RuvB subunits; this complex drives branch migration. In the full resolvosome a probable DNA-RuvA(4)-RuvB(12)-RuvC(2) complex forms which resolves the HJ.

The protein localises to the cytoplasm. The catalysed reaction is ATP + H2O = ADP + phosphate + H(+). Its function is as follows. The RuvA-RuvB-RuvC complex processes Holliday junction (HJ) DNA during genetic recombination and DNA repair, while the RuvA-RuvB complex plays an important role in the rescue of blocked DNA replication forks via replication fork reversal (RFR). RuvA specifically binds to HJ cruciform DNA, conferring on it an open structure. The RuvB hexamer acts as an ATP-dependent pump, pulling dsDNA into and through the RuvAB complex. RuvB forms 2 homohexamers on either side of HJ DNA bound by 1 or 2 RuvA tetramers; 4 subunits per hexamer contact DNA at a time. Coordinated motions by a converter formed by DNA-disengaged RuvB subunits stimulates ATP hydrolysis and nucleotide exchange. Immobilization of the converter enables RuvB to convert the ATP-contained energy into a lever motion, pulling 2 nucleotides of DNA out of the RuvA tetramer per ATP hydrolyzed, thus driving DNA branch migration. The RuvB motors rotate together with the DNA substrate, which together with the progressing nucleotide cycle form the mechanistic basis for DNA recombination by continuous HJ branch migration. Branch migration allows RuvC to scan DNA until it finds its consensus sequence, where it cleaves and resolves cruciform DNA. This is Holliday junction branch migration complex subunit RuvB from Shewanella baltica (strain OS155 / ATCC BAA-1091).